The chain runs to 71 residues: Small ribosomal subunit protein bS21 (71 aa).

Belongs to the bacterial ribosomal protein bS21 family.

This Buchnera aphidicola subsp. Cinara cedri (strain Cc) protein is Small ribosomal subunit protein bS21.